Consider the following 260-residue polypeptide: Phosphatidylglycerol--prolipoprotein diacylglyceryl transferase (260 aa).

Helical transmembrane passes span 17–37 (VVKW…SWIF), 52–72 (LTAA…LHVI), 85–105 (IFSG…IGLW), and 113–133 (FNLG…QAIG). R134 contacts a 1,2-diacyl-sn-glycero-3-phospho-(1'-sn-glycerol). Helical transmembrane passes span 170 to 190 (APTQ…SLFI), 198 to 218 (GQLF…IGFV), and 227 to 247 (GLEQ…PLFI).

It belongs to the Lgt family.

Its subcellular location is the cell membrane. The enzyme catalyses L-cysteinyl-[prolipoprotein] + a 1,2-diacyl-sn-glycero-3-phospho-(1'-sn-glycerol) = an S-1,2-diacyl-sn-glyceryl-L-cysteinyl-[prolipoprotein] + sn-glycerol 1-phosphate + H(+). It participates in protein modification; lipoprotein biosynthesis (diacylglyceryl transfer). Catalyzes the transfer of the diacylglyceryl group from phosphatidylglycerol to the sulfhydryl group of the N-terminal cysteine of a prolipoprotein, the first step in the formation of mature lipoproteins. The protein is Phosphatidylglycerol--prolipoprotein diacylglyceryl transferase of Dehalococcoides mccartyi (strain ATCC BAA-2100 / JCM 16839 / KCTC 5957 / BAV1).